A 593-amino-acid chain; its full sequence is MVTLYSSPSTHSSGPVASYSNSSIGLYNYHHNKQIAVSSILSRKFGSLQINQKPFWNAVRMQDGAVATPPSKIENETPLKKLKNGILPVAPPKEQKDTIDFDSNKAKSTVSITVVGASGDLAKKKIFPALFALYYEGCLPEHFTIFGYARSKMTDAELRNMVSKTLTCRIDKRENCGEKMEQFLERCFYHSGQYDSLENFAELDKKLKEHEAGRFSNRLFYLSIPPNIFINAVRCASLSASSAHGWTRVIVEKPFGRDSESSAALTRSLKQYLNEDQIFRIDHYLGKELVENLSVLRFSNLIFEPLWSRQCIRNVQFIFSEDFGTEGRGGYFDHYGIIRDIMQNHLLQILALFAMETPVSLDAEDIRNEKVKVLRSMRPLQLDDVIIGQYKCHTKGDVTYPGYTDDKTVPKDSLTPTFAAAALFIDNARWDGVPFLMKAGKALHTRSAEIRVQFRHVPGNLYNKNFGSDLDQATNELVIRVQPNEAIYLKINNKVPGLGMRLDRSNLNLLYSARYSKEIPDAYERLLLDAIEGERRLFIRSDELDAAWSLFTPVLKELEDKKIVPEYYPYGSRGPIGAHYLAARYKVRWGDLV.

Residues 116–123 and Arg-150 contribute to the NADP(+) site; that span reads GASGDLAK. Cys-168 and Cys-176 are joined by a disulfide. Lys-253 is a binding site for NADP(+). D-glucose 6-phosphate is bound by residues Lys-253, 283–287, Glu-321, and Asp-340; that span reads HYLGK. His-345 acts as the Proton acceptor in catalysis. Lys-438 serves as a coordination point for NADP(+). D-glucose 6-phosphate contacts are provided by Lys-441 and Arg-446. 2 residues coordinate NADP(+): Arg-451 and Arg-480. Residue Gln-482 coordinates D-glucose 6-phosphate. NADP(+) contacts are provided by residues 488–490 and Arg-573; that span reads YLK.

This sequence belongs to the glucose-6-phosphate dehydrogenase family. In terms of assembly, homodimer.

It localises to the plastid. Its subcellular location is the chloroplast. It catalyses the reaction D-glucose 6-phosphate + NADP(+) = 6-phospho-D-glucono-1,5-lactone + NADPH + H(+). It functions in the pathway carbohydrate degradation; pentose phosphate pathway; D-ribulose 5-phosphate from D-glucose 6-phosphate (oxidative stage): step 1/3. Regulated by metabolites. Post-translationally inactivated by cysteine-mediated redox modification via the ferredoxin-thioredoxin system in the light and this avoids futile cycles with photosynthetic CO2 fixation. In terms of biological role, catalyzes the rate-limiting step of the oxidative pentose-phosphate pathway, which represents a route for the dissimilation of carbohydrates besides glycolysis. The main function of this enzyme is to provide reducing power (NADPH) and pentose phosphates for fatty acid and nucleic acid synthesis which are involved in membrane synthesis and cell division. This chain is Glucose-6-phosphate 1-dehydrogenase, chloroplastic, found in Nicotiana tabacum (Common tobacco).